The chain runs to 326 residues: N-acetyl-gamma-glutamyl-phosphate reductase (326 aa).

C155 is a catalytic residue.

This sequence belongs to the NAGSA dehydrogenase family. Type 1 subfamily.

It is found in the cytoplasm. The enzyme catalyses N-acetyl-L-glutamate 5-semialdehyde + phosphate + NADP(+) = N-acetyl-L-glutamyl 5-phosphate + NADPH + H(+). It participates in amino-acid biosynthesis; L-arginine biosynthesis; N(2)-acetyl-L-ornithine from L-glutamate: step 3/4. In terms of biological role, catalyzes the NADPH-dependent reduction of N-acetyl-5-glutamyl phosphate to yield N-acetyl-L-glutamate 5-semialdehyde. The protein is N-acetyl-gamma-glutamyl-phosphate reductase of Shewanella frigidimarina (strain NCIMB 400).